A 288-amino-acid polypeptide reads, in one-letter code: N-glycosylase/DNA lyase (288 aa).

The 8-oxoguanine site is built by Gln-35, Ser-62, and Trp-73. The tract at residues 134–203 (NPLVLVERPS…VACASISSEM (70 aa)) is helix-hairpin-helix. Lys-160 (schiff-base intermediate with DNA) is an active-site residue. The 8-oxoguanine site is built by Phe-164 and Pro-189. Residue Asp-191 is part of the active site. The 8-oxoguanine site is built by Asp-238 and Trp-242.

This sequence belongs to the archaeal N-glycosylase/DNA lyase (AGOG) family.

It catalyses the reaction 2'-deoxyribonucleotide-(2'-deoxyribose 5'-phosphate)-2'-deoxyribonucleotide-DNA = a 3'-end 2'-deoxyribonucleotide-(2,3-dehydro-2,3-deoxyribose 5'-phosphate)-DNA + a 5'-end 5'-phospho-2'-deoxyribonucleoside-DNA + H(+). Functionally, DNA repair enzyme that is part of the base excision repair (BER) pathway; protects from oxidative damage by removing the major product of DNA oxidation, 8-oxoguanine (GO), from single- and double-stranded DNA substrates. This chain is N-glycosylase/DNA lyase, found in Aeropyrum pernix (strain ATCC 700893 / DSM 11879 / JCM 9820 / NBRC 100138 / K1).